Here is a 459-residue protein sequence, read N- to C-terminus: Methylenetetrahydrofolate--tRNA-(uracil-5-)-methyltransferase TrmFO (459 aa).

15–20 (GAGLAG) provides a ligand contact to FAD.

It belongs to the MnmG family. TrmFO subfamily. FAD is required as a cofactor.

The protein localises to the cytoplasm. The catalysed reaction is uridine(54) in tRNA + (6R)-5,10-methylene-5,6,7,8-tetrahydrofolate + NADH + H(+) = 5-methyluridine(54) in tRNA + (6S)-5,6,7,8-tetrahydrofolate + NAD(+). It carries out the reaction uridine(54) in tRNA + (6R)-5,10-methylene-5,6,7,8-tetrahydrofolate + NADPH + H(+) = 5-methyluridine(54) in tRNA + (6S)-5,6,7,8-tetrahydrofolate + NADP(+). Catalyzes the folate-dependent formation of 5-methyl-uridine at position 54 (M-5-U54) in all tRNAs. In Syntrophotalea carbinolica (strain DSM 2380 / NBRC 103641 / GraBd1) (Pelobacter carbinolicus), this protein is Methylenetetrahydrofolate--tRNA-(uracil-5-)-methyltransferase TrmFO.